Here is a 362-residue protein sequence, read N- to C-terminus: MESPAVTFTLAYVVFSVCFVFTPNEFHSAGITVQNLLSGWLGSEDVAFVHYHIRRSSATLLAHSLLPMGYFIGMCFAAPEKELYNVHKAADGWKVFVLMAVLLPIATSILAFYWSQKRWSNHPLAKTLAHHALPQSSWRAVASSINTEFRRIDKFATGAPSARVIVTDTWVMKVTTYKVDVAQQQDIHLTVTDSRQHELSPDSNTPVQFITIRVASINPRVKPFDIRLNSTEYGELREKLHAPIRNAANIVIHQTLGDMFLDTFRSLVEANHTYEISSNQELEPCIGCMQTNANIKLVKYCQEANEGECQQCYCRPMWCLTCMGKWFASRQDQQHPETWLSSQVPCPTCRAKFCIVDVCIVR.

Topologically, residues 1 to 6 (MESPAV) are lumenal. A helical transmembrane segment spans residues 7–27 (TFTLAYVVFSVCFVFTPNEFH). Topologically, residues 28 to 56 (SAGITVQNLLSGWLGSEDVAFVHYHIRRS) are cytoplasmic. The chain crosses the membrane as a helical span at residues 57 to 77 (SATLLAHSLLPMGYFIGMCFA). Over 78-94 (APEKELYNVHKAADGWK) the chain is Lumenal. The chain crosses the membrane as a helical span at residues 95–115 (VFVLMAVLLPIATSILAFYWS). Topologically, residues 116–362 (QKRWSNHPLA…FCIVDVCIVR (247 aa)) are cytoplasmic. An RING-type; degenerate zinc finger spans residues 285–350 (CIGCMQTNAN…SSQVPCPTCR (66 aa)).

This sequence belongs to the TMEM129 family. As to quaternary structure, integral component of ER-resident dislocation complexes.

The protein localises to the endoplasmic reticulum membrane. The enzyme catalyses S-ubiquitinyl-[E2 ubiquitin-conjugating enzyme]-L-cysteine + [acceptor protein]-L-lysine = [E2 ubiquitin-conjugating enzyme]-L-cysteine + N(6)-ubiquitinyl-[acceptor protein]-L-lysine.. It functions in the pathway protein modification; protein ubiquitination. Its function is as follows. E3 ubiquitin-protein ligase involved in ER-associated protein degradation, preferentially associates with the E2 enzyme UBE2J2. The sequence is that of E3 ubiquitin-protein ligase TM129 (tmem129) from Xenopus laevis (African clawed frog).